We begin with the raw amino-acid sequence, 338 residues long: MIKQLYKNITICSLTISTALTVFPATSYAKINSEIKAVSEKNLDGDTKMYTRTATTSDSQKNITQSLQFNFLTEPNYDKETVFIKAKGTIGSGLRILDPNGYWNSTLRWPGSYSVSIQNVDDNNNTNVTDFAPKNQDESREVKYTYGYKTGGDFSINRGGLPGNITKESNYSETISYQQPSYRTLLDQSTSHKGVGWKVEAHLINNMGHDHTRQLTNDSDNRTKSEIFSLTRNGNLWAKDNFTPKNKMPVTVSEGFNPEFLAVMSHDKKDEGKSKFVVHYKRSMDEFKIDWNRHGFWGYWSGENHVDKKEEKLSALYEVDWKTHDVKFVKVLNDNEKK.

A signal peptide spans 1-29 (MIKQLYKNITICSLTISTALTVFPATSYA).

This sequence belongs to the aerolysin family.

This is an uncharacterized protein from Staphylococcus aureus (strain bovine RF122 / ET3-1).